The sequence spans 428 residues: Aspartate--tRNA(Asp) ligase (428 aa).

L-aspartate is bound at residue E170. An aspartate region spans residues Q192–K195. R213 lines the L-aspartate pocket. ATP-binding positions include R213 to E215 and E351. Mg(2+) contacts are provided by E351 and S354. Residues S354 and R358 each contribute to the L-aspartate site. G399–R402 contributes to the ATP binding site.

The protein belongs to the class-II aminoacyl-tRNA synthetase family. Type 2 subfamily. In terms of assembly, homodimer. It depends on Mg(2+) as a cofactor.

The protein resides in the cytoplasm. The enzyme catalyses tRNA(Asp) + L-aspartate + ATP = L-aspartyl-tRNA(Asp) + AMP + diphosphate. Functionally, catalyzes the attachment of L-aspartate to tRNA(Asp) in a two-step reaction: L-aspartate is first activated by ATP to form Asp-AMP and then transferred to the acceptor end of tRNA(Asp). This is Aspartate--tRNA(Asp) ligase from Pyrobaculum aerophilum (strain ATCC 51768 / DSM 7523 / JCM 9630 / CIP 104966 / NBRC 100827 / IM2).